The following is a 339-amino-acid chain: MVREEVAGSTQTLQWKCVESRVDSKRLYYGRFILSPLRKGQADTVGIALRRALLGEIEGTCITRAKFGSVPHEYSTIAGIEESVQEILLNLKEIVLRSNLYGVRDASICVKGPRYITAQDIILPPSVEIVDTAQPIANLXEPIDFCIDLQIKRDRGYQTELRKNYQDGSYPIDAVSMPVRNVNYSIFSCGNGNEKHEILFLEIWTNGSLTPKEALYEASRNLIDLFLPFLHAEEEGASFEENKNRFTPPLFTFQKRLTNLKKNKKGIPLNCIFIDQLELTSRTYNCLKRANIHTLLDLLSKTEEDLLRIDXFRMEDRKHIWDTLEKHLPIDLLKNKLSF.

Residues 1 to 233 (MVREEVAGST…DLFLPFLHAE (233 aa)) are alpha N-terminal domain (alpha-NTD). Residues 264-339 (KKGIPLNCIF…IDLLKNKLSF (76 aa)) form an alpha C-terminal domain (alpha-CTD) region.

It belongs to the RNA polymerase alpha chain family. In terms of assembly, in plastids the minimal PEP RNA polymerase catalytic core is composed of four subunits: alpha, beta, beta', and beta''. When a (nuclear-encoded) sigma factor is associated with the core the holoenzyme is formed, which can initiate transcription.

The protein localises to the plastid. The protein resides in the chloroplast. It carries out the reaction RNA(n) + a ribonucleoside 5'-triphosphate = RNA(n+1) + diphosphate. DNA-dependent RNA polymerase catalyzes the transcription of DNA into RNA using the four ribonucleoside triphosphates as substrates. This chain is DNA-directed RNA polymerase subunit alpha, found in Secale strictum (Mountain rye).